Consider the following 219-residue polypeptide: Ribose-5-phosphate isomerase A (219 aa).

Residues 28 to 31 (TGST), 81 to 84 (DGAD), and 94 to 97 (KGGG) contribute to the substrate site. Glu103 serves as the catalytic Proton acceptor. Substrate is bound at residue Lys121.

It belongs to the ribose 5-phosphate isomerase family. Homodimer.

It catalyses the reaction aldehydo-D-ribose 5-phosphate = D-ribulose 5-phosphate. It participates in carbohydrate degradation; pentose phosphate pathway; D-ribose 5-phosphate from D-ribulose 5-phosphate (non-oxidative stage): step 1/1. Functionally, catalyzes the reversible conversion of ribose-5-phosphate to ribulose 5-phosphate. In Pectobacterium atrosepticum (strain SCRI 1043 / ATCC BAA-672) (Erwinia carotovora subsp. atroseptica), this protein is Ribose-5-phosphate isomerase A.